Consider the following 40-residue polypeptide: U1-ectatotoxin-Eb1a subunit A (40 aa).

The protein belongs to the ectatomin family. Ectatomin-Eq subfamily. As to quaternary structure, heterodimer of subunits A and B; disulfide-linked. In terms of tissue distribution, expressed by the venom gland.

The protein resides in the secreted. It is found in the target cell membrane. In Ectatomma brunneum (Ant), this protein is U1-ectatotoxin-Eb1a subunit A.